Here is a 457-residue protein sequence, read N- to C-terminus: Ig mu chain C region (457 aa).

The segment at 1-105 (SSSAPLLFPL…GEKEKKVELQ (105 aa)) is CH1. Cys-27 and Cys-89 are oxidised to a cystine. Residues Asn-45 and Asn-113 are each glycosylated (N-linked (GlcNAc...) asparagine). The CH2 stretch occupies residues 106–220 (VTPELPPNVS…KNVSSVCMGD (115 aa)). The cysteines at positions 136 and 200 are disulfide-linked. N-linked (GlcNAc...) asparagine glycans are attached at residues Asn-212, Asn-276, and Asn-283. The CH3 stretch occupies residues 221–326 (DTSTGISVFL…PLKQSLSRPK (106 aa)). Disulfide bonds link Cys-248–Cys-307 and Cys-355–Cys-417. Residues 327 to 457 (DVANDPPSVF…VLSDTASTCY (131 aa)) form a CH4 region. Asn-444 is a glycosylation site (N-linked (GlcNAc...) asparagine).

The chain is Ig mu chain C region from Suncus murinus (Asian house shrew).